A 597-amino-acid chain; its full sequence is DNA ligase (597 aa).

ATP is bound at residue glutamate 262. Catalysis depends on lysine 264, which acts as the N6-AMP-lysine intermediate. Positions 269, 284, 314, 354, 431, and 437 each coordinate ATP.

It belongs to the ATP-dependent DNA ligase family. The cofactor is Mg(2+). Mn(2+) is required as a cofactor.

It carries out the reaction ATP + (deoxyribonucleotide)n-3'-hydroxyl + 5'-phospho-(deoxyribonucleotide)m = (deoxyribonucleotide)n+m + AMP + diphosphate.. The enzyme catalyses ADP + (deoxyribonucleotide)n-3'-hydroxyl + 5'-phospho-(deoxyribonucleotide)m = (deoxyribonucleotide)n+m + AMP + phosphate.. It catalyses the reaction GTP + (deoxyribonucleotide)n-3'-hydroxyl + 5'-phospho-(deoxyribonucleotide)m = (deoxyribonucleotide)n+m + GMP + diphosphate.. Its activity is regulated as follows. Inhibited by Ca(2+) and Zn(2+). In terms of biological role, DNA ligase that seals nicks in double-stranded DNA during DNA replication, DNA recombination and DNA repair. Can use both ATP and ADP. The sequence is that of DNA ligase from Staphylothermus marinus (strain ATCC 43588 / DSM 3639 / JCM 9404 / F1).